Consider the following 406-residue polypeptide: Succinylornithine transaminase (406 aa).

K252 bears the N6-(pyridoxal phosphate)lysine mark.

The protein belongs to the class-III pyridoxal-phosphate-dependent aminotransferase family. AstC subfamily. The cofactor is pyridoxal 5'-phosphate.

It catalyses the reaction N(2)-succinyl-L-ornithine + 2-oxoglutarate = N-succinyl-L-glutamate 5-semialdehyde + L-glutamate. The protein operates within amino-acid degradation; L-arginine degradation via AST pathway; L-glutamate and succinate from L-arginine: step 3/5. In terms of biological role, catalyzes the transamination of N(2)-succinylornithine and alpha-ketoglutarate into N(2)-succinylglutamate semialdehyde and glutamate. Can also act as an acetylornithine aminotransferase. The sequence is that of Succinylornithine transaminase from Escherichia coli O45:K1 (strain S88 / ExPEC).